The chain runs to 650 residues: 1-deoxy-D-xylulose-5-phosphate synthase (650 aa).

Thiamine diphosphate contacts are provided by residues H73 and 114-116; that span reads SHA. Position 145 (D145) interacts with Mg(2+). Thiamine diphosphate-binding positions include 146–147, N174, Y285, and E367; that span reads GA. N174 serves as a coordination point for Mg(2+). The interval 631–650 is disordered; the sequence is MGDEVGADESNQTPAGGGQA.

The protein belongs to the transketolase family. DXPS subfamily. In terms of assembly, homodimer. Mg(2+) is required as a cofactor. It depends on thiamine diphosphate as a cofactor.

The enzyme catalyses D-glyceraldehyde 3-phosphate + pyruvate + H(+) = 1-deoxy-D-xylulose 5-phosphate + CO2. It functions in the pathway metabolic intermediate biosynthesis; 1-deoxy-D-xylulose 5-phosphate biosynthesis; 1-deoxy-D-xylulose 5-phosphate from D-glyceraldehyde 3-phosphate and pyruvate: step 1/1. Its function is as follows. Catalyzes the acyloin condensation reaction between C atoms 2 and 3 of pyruvate and glyceraldehyde 3-phosphate to yield 1-deoxy-D-xylulose-5-phosphate (DXP). This chain is 1-deoxy-D-xylulose-5-phosphate synthase, found in Parafrankia sp. (strain EAN1pec).